Here is a 561-residue protein sequence, read N- to C-terminus: MRYLELAQLYQKLEKTTMKLIKTRLVADFLKKVPDDHLEFIPYLILGEVFPEWDERELGVGEKLLIKAVAMATGIDAKEIEESVKDTGDLGESIALAVKKKKQKSFFSQPLTIKRVYQTLVKVAETTGEGSQDKKVKYLADLFMDAEPLEAKYLARTILGTMRTGVAEGLLRDAIAMAFHVKVELVERAYMLTSDFGYVAKIAKLEGNEGLAKVQVQLGKPIKPMLAQQAASIRDALLEMGGEAEFEIKYDGARVQVHKDGSKIIVYSRRLENVTRAIPEIVEALKEAIIPEKAIVEGELVAIGENGRPLPFQYVLRRFRRKHNIEEMMEKIPLELNLFDVLYVDGQSLIDTKFIDRRRTLEEIIKQNEKIKVAENLITKKVEEAEAFYKRALEMGHEGLMAKRLDAVYEPGNRGKKWLKIKPTMENLDLVIIGAEWGEGRRAHLFGSFILGAYDPETGEFLEVGKVGSGFTDDDLVEFTKMLKPLIIKEEGKRVWLQPKVVIEVTYQEIQKSPKYRSGFALRFPRFVALRDDKGPEDADTIERIAQLYELQEKMKGKVES.

E247 contributes to the ATP binding site. Catalysis depends on K249, which acts as the N6-AMP-lysine intermediate. 6 residues coordinate ATP: R254, R269, E299, F339, R414, and K420.

Belongs to the ATP-dependent DNA ligase family. In terms of assembly, monomer. Mg(2+) is required as a cofactor.

It carries out the reaction ATP + (deoxyribonucleotide)n-3'-hydroxyl + 5'-phospho-(deoxyribonucleotide)m = (deoxyribonucleotide)n+m + AMP + diphosphate.. Its function is as follows. DNA ligase that seals nicks in double-stranded DNA during DNA replication, DNA recombination and DNA repair. The sequence is that of DNA ligase from Pyrococcus furiosus (strain ATCC 43587 / DSM 3638 / JCM 8422 / Vc1).